We begin with the raw amino-acid sequence, 358 residues long: 3-dehydroquinate synthase (358 aa).

NAD(+) is bound by residues 70 to 75 (DGEQYK), 104 to 108 (GVIGD), 128 to 129 (TT), Lys141, Lys150, and 168 to 171 (CLHT). Zn(2+)-binding residues include Glu183, His246, and His263.

It belongs to the sugar phosphate cyclases superfamily. Dehydroquinate synthase family. The cofactor is Co(2+). It depends on Zn(2+) as a cofactor. Requires NAD(+) as cofactor.

It is found in the cytoplasm. The enzyme catalyses 7-phospho-2-dehydro-3-deoxy-D-arabino-heptonate = 3-dehydroquinate + phosphate. It participates in metabolic intermediate biosynthesis; chorismate biosynthesis; chorismate from D-erythrose 4-phosphate and phosphoenolpyruvate: step 2/7. Functionally, catalyzes the conversion of 3-deoxy-D-arabino-heptulosonate 7-phosphate (DAHP) to dehydroquinate (DHQ). The polypeptide is 3-dehydroquinate synthase (Shewanella loihica (strain ATCC BAA-1088 / PV-4)).